An 86-amino-acid chain; its full sequence is Small ribosomal subunit protein bS20 (86 aa).

Basic and acidic residues predominate over residues 1–16 (MANIKSQEKRIRTNER). The tract at residues 1 to 25 (MANIKSQEKRIRTNERRRLRNQSVK) is disordered.

This sequence belongs to the bacterial ribosomal protein bS20 family.

Binds directly to 16S ribosomal RNA. The polypeptide is Small ribosomal subunit protein bS20 (Mycobacterium sp. (strain JLS)).